The sequence spans 211 residues: Outer-membrane lipoprotein carrier protein (211 aa).

The signal sequence occupies residues 1–24 (MNTIKILIGLLGIFLFSLSGIVSA).

Belongs to the LolA family. In terms of assembly, monomer.

The protein localises to the periplasm. In terms of biological role, participates in the translocation of lipoproteins from the inner membrane to the outer membrane. Only forms a complex with a lipoprotein if the residue after the N-terminal Cys is not an aspartate (The Asp acts as a targeting signal to indicate that the lipoprotein should stay in the inner membrane). This chain is Outer-membrane lipoprotein carrier protein, found in Coxiella burnetii (strain RSA 331 / Henzerling II).